Reading from the N-terminus, the 525-residue chain is GMP synthase [glutamine-hydrolyzing] (525 aa).

A Glutamine amidotransferase type-1 domain is found at 9 to 207 (RILILDFGSQ…VLDICACEAL (199 aa)). The Nucleophile role is filled by C86. Active-site residues include H181 and E183. One can recognise a GMPS ATP-PPase domain in the interval 208–400 (WTPATIIEDA…LGLPYDMLYR (193 aa)). 235 to 241 (SGGVDSS) contacts ATP.

As to quaternary structure, homodimer.

The catalysed reaction is XMP + L-glutamine + ATP + H2O = GMP + L-glutamate + AMP + diphosphate + 2 H(+). Its pathway is purine metabolism; GMP biosynthesis; GMP from XMP (L-Gln route): step 1/1. Functionally, catalyzes the synthesis of GMP from XMP. The sequence is that of GMP synthase [glutamine-hydrolyzing] from Yersinia enterocolitica serotype O:8 / biotype 1B (strain NCTC 13174 / 8081).